The primary structure comprises 953 residues: MKISELSPEYREPPSHAGLIADLSKAVSDVESFAASATAPEKLAADLRRILTSLASAASSSSFTESLSVQIWRLGTRLWNAVVDRANSAALAGGPAALAVEAEIRQAAPELLLLAGIPNGVPSAAAKVASFFHRSGLAWLDLGRVDLASACFEKATPLVSAAATEDRGVLLELNLARARAASDAGDQALAVALLSRSKPLAAASPEGAKSLAQGYLSIGEATLAAKHSNPAVEASTLFTEALDLCEKAASPSSSSPRTPPYGGATPKTPNLEGLKRRCLRFLALERLQAQDYEGVLRCIRVSRASMGLEEEHPSIGVMAMRAWIGSGNMAEADKELERLMANALATENLCVSAAEAYLAAAGPEAARKVLIALAARCRAGGAAAAVRVVKQVIDGGGGGIGRARAIAELVSDERVVALFDGPGNTHERGTMHALLWNCGTEHFRAKNYDTSADLIERSMLYVSRDEESRSRRADCFRVLSICHIALQHLDRALEFVNEAYKVEPNIKCAFLKVKINLQKGEEDEAFKQMKTMVGCVDFNPEFLTLTAHEAMSCKSFGVAVASLSYLLGLYSAERPMPMPEVAVLRNLIELLSREPGTEAEILKYSRRAKQRMADLGVESFFGSGIVGGRELNWFADLSWNMGLRASKEKKYNFGAEFFELAAEFFSSRNAECDENRSKVCKALIMAVTIMLNAEELNNSPLSDSDIKKGVEMLSRAGKLLPLISPSVPVASDQLEANNFLYLHTFNSYQLMGRMGTPAHPQQLQLIKNFASSKACTPANLLTLGVTASKGALPNMLAAEFSLKACITTALASQSPNYRVISCALRKLACLAGLQDLNGSKSDAAYDVFQQAYQIVVGLKEGEYPVEEGQWLVATAWNMSCLPLRLHQAKVARKWMKMGLDLARHLEGMKERIASMQTTFENFERVSGDEPDECSQEEAPKASISGSMSQPVLV.

A TPR 1 repeat occupies 129 to 162 (ASFFHRSGLAWLDLGRVDLASACFEKATPLVSAA). Residues 248–269 (AASPSSSSPRTPPYGGATPKTP) form a disordered region. 2 TPR repeats span residues 432 to 465 (HALLWNCGTEHFRAKNYDTSADLIERSMLYVSRD) and 473 to 506 (ADCFRVLSICHIALQHLDRALEFVNEAYKVEPNI). A disordered region spans residues 925–953 (VSGDEPDECSQEEAPKASISGSMSQPVLV). Positions 943–953 (ISGSMSQPVLV) are enriched in polar residues.

As to quaternary structure, interacts with HEI10 and SHOC1.

The protein resides in the nucleus. Its subcellular location is the chromosome. In terms of biological role, required for crossover formation, complete synapsis of homologous chromosomes and bivalent formation during meiosis. Is specific to recombination events resulting in interference-sensitive crossovers (class I meiotic crossover) and works cooperatively with MER3 to promote crossovers. This chain is TPR repeat-containing protein ZIP4, found in Oryza sativa subsp. japonica (Rice).